Consider the following 327-residue polypeptide: MAAPIRAFVLRVLSDSTRNIHHVLRCRSKYLCRRAAITARRGYSDSTEGRSTHFGFQTVPEEEKAEKVYKVFESVAKKYDVMNDAMSLGIHRLWKDTLLHIMNPQPGLRLLDTAGGTGDISFRFLEYTRSMYDRQQRLRAKSQQTPSWKDIAGHYVSDEEGPPQSRAVVCDINKEMLKVGKQRAEDAGITTGLSWVAGDAEELPFDDDQFDMYTIAFGIRNVTHIEQALQEAFRVLKPGGRFMCLEFSKVTNPLLARLYDAYSFQMIPVLGEVIAGDWKSYQYLVESIRKFPDQEIFKEMIEDAGFFRVQYFNLTGGIVAIHSGFKL.

A mitochondrion-targeting transit peptide spans 1 to 43 (MAAPIRAFVLRVLSDSTRNIHHVLRCRSKYLCRRAAITARRGY). S-adenosyl-L-methionine-binding positions include Thr117, Asp171, and 199-200 (DA).

This sequence belongs to the class I-like SAM-binding methyltransferase superfamily. MenG/UbiE family. Component of a multi-subunit COQ enzyme complex, composed of at least coq3, coq4, coq5, coq6, coq7 and coq9.

Its subcellular location is the mitochondrion inner membrane. It catalyses the reaction a 2-methoxy-6-(all-trans-polyprenyl)benzene-1,4-diol + S-adenosyl-L-methionine = a 5-methoxy-2-methyl-3-(all-trans-polyprenyl)benzene-1,4-diol + S-adenosyl-L-homocysteine + H(+). Its pathway is cofactor biosynthesis; ubiquinone biosynthesis. In terms of biological role, methyltransferase required for the conversion of 2-polyprenyl-6-methoxy-1,4-benzoquinol (DDMQH2) to 2-polyprenyl-3-methyl-6-methoxy-1,4-benzoquinol (DMQH2). The sequence is that of 2-methoxy-6-polyprenyl-1,4-benzoquinol methylase, mitochondrial from Danio rerio (Zebrafish).